A 192-amino-acid chain; its full sequence is Protein GrpE (192 aa).

Positions 1 to 34 are disordered; the sequence is MSSKEQKTPNEQVSEEMENTAEQQVEATQETGEC. Residues 20–31 show a composition bias toward polar residues; that stretch reads TAEQQVEATQET.

The protein belongs to the GrpE family. As to quaternary structure, homodimer.

Its subcellular location is the cytoplasm. In terms of biological role, participates actively in the response to hyperosmotic and heat shock by preventing the aggregation of stress-denatured proteins, in association with DnaK and GrpE. It is the nucleotide exchange factor for DnaK and may function as a thermosensor. Unfolded proteins bind initially to DnaJ; upon interaction with the DnaJ-bound protein, DnaK hydrolyzes its bound ATP, resulting in the formation of a stable complex. GrpE releases ADP from DnaK; ATP binding to DnaK triggers the release of the substrate protein, thus completing the reaction cycle. Several rounds of ATP-dependent interactions between DnaJ, DnaK and GrpE are required for fully efficient folding. This chain is Protein GrpE, found in Yersinia pseudotuberculosis serotype I (strain IP32953).